The chain runs to 467 residues: Inactive pancreatic lipase-related protein 1 (467 aa).

The first 17 residues, 1–17 (MVSIWTIALFLLGAAKA), serve as a signal peptide directing secretion. Disulfide bonds link Cys-21-Cys-27 and Cys-109-Cys-120. N-linked (GlcNAc...) asparagine glycosylation occurs at Asn-157. Ser-171 functions as the Nucleophile in the catalytic mechanism. The Charge relay system role is filled by Asp-194. The Ca(2+) site is built by Glu-205, Arg-208, Asp-210, and Asp-213. A disulfide bridge links Cys-255 with Cys-279. His-281 serves as the catalytic Charge relay system. Cystine bridges form between Cys-303-Cys-314, Cys-317-Cys-322, and Cys-451-Cys-467. Residues 356 to 467 (WRYGVSITLS…EDVLLTLTPC (112 aa)) enclose the PLAT domain.

It belongs to the AB hydrolase superfamily. Lipase family. As to expression, detected in pancreas (at protein level).

It is found in the secreted. In terms of biological role, may function as inhibitor of dietary triglyceride digestion. Lacks detectable lipase activity towards triglycerides, diglycerides, phosphatidylcholine, galactolipids or cholesterol esters (in vitro). This is Inactive pancreatic lipase-related protein 1 (PNLIPRP1) from Canis lupus familiaris (Dog).